The sequence spans 89 residues: Large ribosomal subunit protein bL27 (89 aa).

Positions 1-22 are disordered; sequence MAHKKAGGSSRNGRDSAGRRLG.

It belongs to the bacterial ribosomal protein bL27 family.

The chain is Large ribosomal subunit protein bL27 from Sphingopyxis alaskensis (strain DSM 13593 / LMG 18877 / RB2256) (Sphingomonas alaskensis).